A 152-amino-acid polypeptide reads, in one-letter code: Large ribosomal subunit protein uL22 (152 aa).

It belongs to the universal ribosomal protein uL22 family. Part of the 50S ribosomal subunit.

Its function is as follows. This protein binds specifically to 23S rRNA. It makes multiple contacts with different domains of the 23S rRNA in the assembled 50S subunit and ribosome. The globular domain of the protein is located near the polypeptide exit tunnel on the outside of the subunit, while an extended beta-hairpin is found that lines the wall of the exit tunnel in the center of the 70S ribosome. The chain is Large ribosomal subunit protein uL22 from Nitrosopumilus maritimus (strain SCM1).